The primary structure comprises 162 residues: Shikimate kinase (162 aa).

Position 10-15 (10-15 (GAGKST)) interacts with ATP. Residue Ser14 participates in Mg(2+) binding. Positions 28, 52, and 73 each coordinate substrate. ATP is bound at residue Arg113. Arg129 provides a ligand contact to substrate.

It belongs to the shikimate kinase family. As to quaternary structure, monomer. Mg(2+) serves as cofactor.

The protein localises to the cytoplasm. It carries out the reaction shikimate + ATP = 3-phosphoshikimate + ADP + H(+). Its pathway is metabolic intermediate biosynthesis; chorismate biosynthesis; chorismate from D-erythrose 4-phosphate and phosphoenolpyruvate: step 5/7. In terms of biological role, catalyzes the specific phosphorylation of the 3-hydroxyl group of shikimic acid using ATP as a cosubstrate. The protein is Shikimate kinase of Lactococcus lactis subsp. cremoris (strain MG1363).